Consider the following 352-residue polypeptide: Histidinol-phosphate aminotransferase (352 aa).

K211 carries the N6-(pyridoxal phosphate)lysine modification.

It belongs to the class-II pyridoxal-phosphate-dependent aminotransferase family. Histidinol-phosphate aminotransferase subfamily. As to quaternary structure, homodimer. The cofactor is pyridoxal 5'-phosphate.

The enzyme catalyses L-histidinol phosphate + 2-oxoglutarate = 3-(imidazol-4-yl)-2-oxopropyl phosphate + L-glutamate. It functions in the pathway amino-acid biosynthesis; L-histidine biosynthesis; L-histidine from 5-phospho-alpha-D-ribose 1-diphosphate: step 7/9. The polypeptide is Histidinol-phosphate aminotransferase (Haemophilus influenzae (strain PittGG)).